A 411-amino-acid chain; its full sequence is 1-deoxy-D-xylulose 5-phosphate reductoisomerase (411 aa).

NADPH contacts are provided by threonine 23, glycine 24, serine 25, isoleucine 26, glycine 49, arginine 50, asparagine 51, and asparagine 137. 1-deoxy-D-xylulose 5-phosphate is bound at residue lysine 138. Glutamate 139 contributes to the NADPH binding site. Aspartate 163 provides a ligand contact to Mn(2+). 4 residues coordinate 1-deoxy-D-xylulose 5-phosphate: serine 164, glutamate 165, serine 199, and histidine 222. Glutamate 165 provides a ligand contact to Mn(2+). Glycine 228 is an NADPH binding site. The 1-deoxy-D-xylulose 5-phosphate site is built by serine 235, asparagine 240, lysine 241, and glutamate 244. Residue glutamate 244 participates in Mn(2+) binding.

This sequence belongs to the DXR family. Mg(2+) is required as a cofactor. It depends on Mn(2+) as a cofactor.

It carries out the reaction 2-C-methyl-D-erythritol 4-phosphate + NADP(+) = 1-deoxy-D-xylulose 5-phosphate + NADPH + H(+). It participates in isoprenoid biosynthesis; isopentenyl diphosphate biosynthesis via DXP pathway; isopentenyl diphosphate from 1-deoxy-D-xylulose 5-phosphate: step 1/6. Functionally, catalyzes the NADPH-dependent rearrangement and reduction of 1-deoxy-D-xylulose-5-phosphate (DXP) to 2-C-methyl-D-erythritol 4-phosphate (MEP). This chain is 1-deoxy-D-xylulose 5-phosphate reductoisomerase, found in Mannheimia succiniciproducens (strain KCTC 0769BP / MBEL55E).